The primary structure comprises 90 residues: MALNLEKKQEIIKAFATKENDTGSCEVQVALLNERIKLLTEHLKANPKDHSSRLGLLELVAQRRNLLKYIKRTDHARYVVLIEKLGIKDR.

It belongs to the universal ribosomal protein uS15 family. Part of the 30S ribosomal subunit. Forms a bridge to the 50S subunit in the 70S ribosome, contacting the 23S rRNA.

One of the primary rRNA binding proteins, it binds directly to 16S rRNA where it helps nucleate assembly of the platform of the 30S subunit by binding and bridging several RNA helices of the 16S rRNA. Functionally, forms an intersubunit bridge (bridge B4) with the 23S rRNA of the 50S subunit in the ribosome. In Helicobacter acinonychis (strain Sheeba), this protein is Small ribosomal subunit protein uS15.